The chain runs to 579 residues: CTP synthase (579 aa).

Residues 1-281 (MPALRKHPQT…DAYVVRRLNL (281 aa)) form an amidoligase domain region. Residue S23 participates in CTP binding. S23 serves as a coordination point for UTP. ATP is bound by residues 24-29 (SLGKGL) and D81. Residues D81 and E155 each contribute to the Mg(2+) site. CTP-binding positions include 162–164 (DIE), 202–207 (KTKPTQ), and K238. Residues 202-207 (KTKPTQ) and K238 contribute to the UTP site. The region spanning 306–554 (RIALVGKYID…IGAALDYKAA (249 aa)) is the Glutamine amidotransferase type-1 domain. G369 provides a ligand contact to L-glutamine. Catalysis depends on C396, which acts as the Nucleophile; for glutamine hydrolysis. L-glutamine-binding positions include 397 to 400 (LGLQ), E419, and R480. Residues H527 and E529 contribute to the active site.

This sequence belongs to the CTP synthase family. As to quaternary structure, homotetramer.

The catalysed reaction is UTP + L-glutamine + ATP + H2O = CTP + L-glutamate + ADP + phosphate + 2 H(+). It carries out the reaction L-glutamine + H2O = L-glutamate + NH4(+). It catalyses the reaction UTP + NH4(+) + ATP = CTP + ADP + phosphate + 2 H(+). It functions in the pathway pyrimidine metabolism; CTP biosynthesis via de novo pathway; CTP from UDP: step 2/2. Its activity is regulated as follows. Allosterically activated by GTP, when glutamine is the substrate; GTP has no effect on the reaction when ammonia is the substrate. The allosteric effector GTP functions by stabilizing the protein conformation that binds the tetrahedral intermediate(s) formed during glutamine hydrolysis. Inhibited by the product CTP, via allosteric rather than competitive inhibition. Functionally, catalyzes the ATP-dependent amination of UTP to CTP with either L-glutamine or ammonia as the source of nitrogen. Regulates intracellular CTP levels through interactions with the four ribonucleotide triphosphates. The protein is CTP synthase of Mycobacterium sp. (strain JLS).